Here is a 262-residue protein sequence, read N- to C-terminus: [LysW]-aminoadipate/[LysW]-glutamate kinase (262 aa).

Substrate contacts are provided by residues 35-36, arginine 62, and asparagine 167; that span reads GG.

Belongs to the acetylglutamate kinase family. LysZ subfamily.

Its subcellular location is the cytoplasm. It catalyses the reaction [amino-group carrier protein]-C-terminal-N-(1,4-dicarboxybutan-1-yl)-L-glutamine + ATP = [amino-group carrier protein]-C-terminal-N-(1-carboxy-5-phosphooxy-5-oxopentan-1-yl)-L-glutamine + ADP. The enzyme catalyses [amino-group carrier protein]-C-terminal-gamma-(L-glutamyl)-L-glutamate + ATP = [amino-group carrier protein]-C-terminal-gamma-(5-phospho-L-glutamyl)-L-glutamate + ADP. The protein operates within amino-acid biosynthesis; L-lysine biosynthesis via AAA pathway; L-lysine from L-alpha-aminoadipate (Thermus route): step 2/5. It functions in the pathway amino-acid biosynthesis; L-arginine biosynthesis. Functionally, involved in both the arginine and lysine biosynthetic pathways. Phosphorylates the LysW-bound precursors glutamate (for arginine biosynthesis), respectively alpha-aminoadipate (for lysine biosynthesis). In Metallosphaera sedula (strain ATCC 51363 / DSM 5348 / JCM 9185 / NBRC 15509 / TH2), this protein is [LysW]-aminoadipate/[LysW]-glutamate kinase.